The sequence spans 513 residues: 2-isopropylmalate synthase (513 aa).

Positions 4-268 constitute a Pyruvate carboxyltransferase domain; sequence IKIFDTTLRD…ETGIRTELIY (265 aa). Mn(2+) contacts are provided by Asp-13, His-203, His-205, and Asn-239. The interval 392–513 is regulatory domain; sequence RLVHFHVHTG…GLLRKNGGVE (122 aa).

This sequence belongs to the alpha-IPM synthase/homocitrate synthase family. LeuA type 1 subfamily. In terms of assembly, homodimer. Requires Mn(2+) as cofactor.

Its subcellular location is the cytoplasm. The enzyme catalyses 3-methyl-2-oxobutanoate + acetyl-CoA + H2O = (2S)-2-isopropylmalate + CoA + H(+). It functions in the pathway amino-acid biosynthesis; L-leucine biosynthesis; L-leucine from 3-methyl-2-oxobutanoate: step 1/4. Its function is as follows. Catalyzes the condensation of the acetyl group of acetyl-CoA with 3-methyl-2-oxobutanoate (2-ketoisovalerate) to form 3-carboxy-3-hydroxy-4-methylpentanoate (2-isopropylmalate). This chain is 2-isopropylmalate synthase, found in Thermotoga neapolitana (strain ATCC 49049 / DSM 4359 / NBRC 107923 / NS-E).